The sequence spans 658 residues: ATP-dependent RNA helicase MSS116, mitochondrial (658 aa).

A mitochondrion-targeting transit peptide spans Met1–Ser35. Basic and acidic residues predominate over residues His40–Ser79. The segment at His40–Leu104 is disordered. A Q motif motif is present at residues Thr126–Gln154. The 186-residue stretch at Lys158–Leu343 folds into the Helicase ATP-binding domain. Ala171 to Thr178 contacts ATP. The DEAD box signature appears at Asp284 to Asp287. Positions Asn372 to Ser528 constitute a Helicase C-terminal domain.

It belongs to the DEAD box helicase family. DDX18/HAS1 subfamily.

It is found in the mitochondrion matrix. It catalyses the reaction ATP + H2O = ADP + phosphate + H(+). Functionally, ATP-dependent RNA helicase required for mitochondrial splicing of group I and II introns. Also required for efficient mitochondrial translation. In Eremothecium gossypii (strain ATCC 10895 / CBS 109.51 / FGSC 9923 / NRRL Y-1056) (Yeast), this protein is ATP-dependent RNA helicase MSS116, mitochondrial (MSS116).